We begin with the raw amino-acid sequence, 335 residues long: Pyridoxal 5'-phosphate synthase subunit PdxS (335 aa).

D30 contacts D-ribose 5-phosphate. K87 acts as the Schiff-base intermediate with D-ribose 5-phosphate in catalysis. Residue G159 participates in D-ribose 5-phosphate binding. R171 is a D-glyceraldehyde 3-phosphate binding site. Residues G257 and 278–279 (GS) contribute to the D-ribose 5-phosphate site.

This sequence belongs to the PdxS/SNZ family. As to quaternary structure, homohexamer. In the presence of PdxT, forms a dodecamer of heterodimers.

It carries out the reaction aldehydo-D-ribose 5-phosphate + D-glyceraldehyde 3-phosphate + L-glutamine = pyridoxal 5'-phosphate + L-glutamate + phosphate + 3 H2O + H(+). It functions in the pathway cofactor biosynthesis; pyridoxal 5'-phosphate biosynthesis. Functionally, catalyzes the formation of pyridoxal 5'-phosphate from ribose 5-phosphate (RBP), glyceraldehyde 3-phosphate (G3P) and ammonia. The ammonia is provided by the PdxT subunit. Can also use ribulose 5-phosphate and dihydroxyacetone phosphate as substrates, resulting from enzyme-catalyzed isomerization of RBP and G3P, respectively. This Pyrococcus horikoshii (strain ATCC 700860 / DSM 12428 / JCM 9974 / NBRC 100139 / OT-3) protein is Pyridoxal 5'-phosphate synthase subunit PdxS.